Reading from the N-terminus, the 220-residue chain is MGIVRSRLHKRKITGGKTKIHRKRMKAELGRLPANTRLGARRVSPVRARGGNFKIRALRLDTGNFAWASEAIAHRVRLLDVVYNATSNELVRTKTLVKNCIVAVDAAPFKRWYAKHYGIDLDADKKSTKAAVAAEKKGRKSAHAAADKYDVNKASPKLQREWTRRRRNHRVEKAIADQLREGRVLARITSRPGQSGRADGILLEGAELQFYLKRLEKKKK.

Belongs to the eukaryotic ribosomal protein eS8 family.

The chain is Small ribosomal subunit protein eS8 (RPS8A) from Leishmania major.